The sequence spans 607 residues: Nexilin (607 aa).

Positions 1–14 (MNDVSQKAEIKEML) are enriched in basic and acidic residues. Disordered regions lie at residues 1–143 (MNDV…EDKM) and 165–268 (ETEA…RRRI). The residue at position 16 (serine 16) is a Phosphoserine. Basic and acidic residues-rich tracts occupy residues 40 to 85 (GKFD…RAEQ), 120 to 143 (KTKD…EDKM), 167 to 221 (EAKK…HMVN), and 228 to 268 (DRET…RRRI). Phosphoserine is present on serine 172. Serine 281, serine 288, and serine 296 each carry phosphoserine. Position 301 is a phosphothreonine (threonine 301). 2 disordered regions span residues 419-444 (NFHE…KVNM) and 480-514 (AALQ…GAPW). 2 positions are modified to phosphoserine: serine 495 and serine 500. Threonine 502 carries the phosphothreonine modification. In terms of domain architecture, Ig-like spans 513-601 (PWFKKPLRNT…GSAASTCILT (89 aa)).

As to quaternary structure, interacts with F-actin.

It localises to the cytoplasm. Its subcellular location is the cytoskeleton. The protein localises to the cell junction. The protein resides in the adherens junction. It is found in the myofibril. It localises to the sarcomere. Its subcellular location is the z line. Functionally, involved in regulating cell migration through association with the actin cytoskeleton. Has an essential role in the maintenance of Z line and sarcomere integrity. In Mus musculus (Mouse), this protein is Nexilin.